Consider the following 496-residue polypeptide: Membrane-bound lytic murein transglycosylase F (496 aa).

The N-terminal stretch at 1 to 29 is a signal peptide; it reads MFFRPDFRPRCAKWLIATGLFLMLGACVE. The non-LT domain stretch occupies residues 30–267; it reads KPTTLERVKE…RLKDRYYGHV (238 aa). An LT domain region spans residues 268-496; the sequence is DVLGYVGAYT…SGSSPDKPAL (229 aa). Glu-314 is an active-site residue. The interval 464-496 is disordered; the sequence is VADGNLHVPGVDKTQPPAPPAPASGSSPDKPAL. The span at 486 to 496 shows a compositional bias: low complexity; that stretch reads ASGSSPDKPAL.

It in the N-terminal section; belongs to the bacterial solute-binding protein 3 family. The protein in the C-terminal section; belongs to the transglycosylase Slt family.

The protein resides in the cell outer membrane. It catalyses the reaction Exolytic cleavage of the (1-&gt;4)-beta-glycosidic linkage between N-acetylmuramic acid (MurNAc) and N-acetylglucosamine (GlcNAc) residues in peptidoglycan, from either the reducing or the non-reducing ends of the peptidoglycan chains, with concomitant formation of a 1,6-anhydrobond in the MurNAc residue.. Its function is as follows. Murein-degrading enzyme that degrades murein glycan strands and insoluble, high-molecular weight murein sacculi, with the concomitant formation of a 1,6-anhydromuramoyl product. Lytic transglycosylases (LTs) play an integral role in the metabolism of the peptidoglycan (PG) sacculus. Their lytic action creates space within the PG sacculus to allow for its expansion as well as for the insertion of various structures such as secretion systems and flagella. This chain is Membrane-bound lytic murein transglycosylase F, found in Pseudomonas savastanoi pv. phaseolicola (strain 1448A / Race 6) (Pseudomonas syringae pv. phaseolicola (strain 1448A / Race 6)).